We begin with the raw amino-acid sequence, 644 residues long: MPSKAENLRPSEPAPQPPEGRTLQGQLPGAPPAQRAGSPPDAPGSESPALACSTPATPSGEDPPARAAPIAPRPPARPRLERALSLDDKGWRRRRFRGSQEDLEARNGTSPSRGSVQSEGPGAPAHSCSPPCLSTSLQEIPKSRGVLSSERGSPSSGGNPLSGVASSSPNLPHRDAAVAGSSPRLPSLLPPRPPPALSLDIASDSLRTANKVDSDLADYKLRAQPLLVRAHSSLGPGRPRSPLACDDCSLRSAKSSFSLLAPIRSKDVRSRSYLEGSLLASGALLGADELARYFPDRNVALFVATWNMQGQKELPPSLDEFLLPAEADYAQDLYVIGVQEGCSDRREWETRLQETLGPHYVLLSSAAHGVLYMSLFIRRDLIWFCSEVECSTVTTRIVSQIKTKGALGISFTFFGTSFLFITSHFTSGDGKVAERLLDYTRTVQALVLPRNVPDTNPYRSSAADVTTRFDEVFWFGDFNFRLSGGRTVVDALLCQGLVVDVPALLQHDQLIREMRKGSIFKGFQEPDIHFLPSYKFDIGKDTYDSTSKQRTPSYTDRVLYRSRHKGDICPVSYSSCPGIKTSDHRPVYGLFRVKVRPGRDNIPLAAGKFDRELYLLGIKRRISKEIQRQQALQSQNSSTICSVS.

The disordered stretch occupies residues 1–193 (MPSKAENLRP…RLPSLLPPRP (193 aa)). 8 repeat units span residues 10 to 13 (PSEP), 15 to 18 (PQPP), 28 to 31 (PGAP), 39 to 42 (PPDA), 55 to 58 (PATP), 69 to 71 (PIA), 72 to 74 (PRP), and 75 to 78 (PARP). The tract at residues 10-242 (PSEPAPQPPE…SLGPGRPRSP (233 aa)) is 13 X 4 AA repeats of P-X-X-P. Residues 78–90 (PRLERALSLDDKG) are compositionally biased toward basic and acidic residues. Ser99 carries the phosphoserine modification. Residues 107–118 (NGTSPSRGSVQS) show a composition bias toward polar residues. Residues 121-124 (PGAP) form repeat 9. A compositionally biased stretch (low complexity) spans 152–163 (GSPSSGGNPLSG). A run of 4 repeats spans residues 169 to 172 (PNLP), 183 to 185 (PRL), 190 to 193 (PPRP), and 236 to 239 (PGRP). Residues Ser241 and Ser256 each carry the phosphoserine modification. Cys641 bears the Cysteine methyl ester mark. Residue Cys641 is the site of S-farnesyl cysteine attachment. Positions 642–644 (SVS) are cleaved as a propeptide — removed in mature form.

The protein belongs to the inositol 1,4,5-trisphosphate 5-phosphatase type IV family. In terms of assembly, interacts (when prenylated) with PDE6D; this is important for normal location in cilia. Detected in brain, heart, pancreas, testis and spleen.

It is found in the cytoplasm. It localises to the cytoskeleton. Its subcellular location is the cilium axoneme. The protein localises to the golgi apparatus. The protein resides in the golgi stack membrane. It is found in the cell membrane. It localises to the cell projection. Its subcellular location is the ruffle. The protein localises to the nucleus. The enzyme catalyses a 1,2-diacyl-sn-glycero-3-phospho-(1D-myo-inositol-4,5-bisphosphate) + H2O = a 1,2-diacyl-sn-glycero-3-phospho-(1D-myo-inositol 4-phosphate) + phosphate. The catalysed reaction is a 1,2-diacyl-sn-glycero-3-phospho-(1D-myo-inositol-3,4,5-trisphosphate) + H2O = a 1,2-diacyl-sn-glycero-3-phospho-(1D-myo-inositol-3,4-bisphosphate) + phosphate. It catalyses the reaction a 1,2-diacyl-sn-glycero-3-phospho-(1D-myo-inositol-3,5-bisphosphate) + H2O = a 1,2-diacyl-sn-glycero-3-phospho-(1D-myo-inositol-3-phosphate) + phosphate. Its activity is regulated as follows. Active in the presence of octyl-glucoside or Triton X-100, but completely inhibited by CTAB. Its function is as follows. Phosphatidylinositol (PtdIns) phosphatase that specifically hydrolyzes the 5-phosphate of phosphatidylinositol-3,4,5-trisphosphate (PtdIns(3,4,5)P3), phosphatidylinositol 4,5-bisphosphate (PtdIns(4,5)P2) and phosphatidylinositol 3,5-bisphosphate (PtdIns(3,5)P2). Specific for lipid substrates, inactive towards water soluble inositol phosphates. Plays an essential role in the primary cilium by controlling ciliary growth and phosphoinositide 3-kinase (PI3K) signaling and stability. The protein is Phosphatidylinositol polyphosphate 5-phosphatase type IV (INPP5E) of Homo sapiens (Human).